The primary structure comprises 732 residues: Engulfment and cell motility protein 2 (732 aa).

Residue Tyr-48 is modified to Phosphotyrosine. The 175-residue stretch at 323-497 (AQRDIIFELR…VVREQITRAL (175 aa)) folds into the ELMO domain. Ser-515 is subject to Phosphoserine. The region spanning 565–686 (SSFRKIGNRR…LLGKDMSSEL (122 aa)) is the PH domain. The SH3-binding signature appears at 712–719 (PEAPPPVP). Phosphotyrosine is present on Tyr-729.

Interacts directly with the SH3-domain of DOCK1 via its SH3-binding site. Probably forms a heterotrimeric complex with DOCK1 and RAC1. Interacts with ARHGEF16, DOCK4 and EPHA2; mediates activation of RAC1 by EPHA2. Interacts with ADGRB3. Interacts with AUTS2; the interaction is direct.

The protein resides in the cytoplasm. The protein localises to the cytosol. Its subcellular location is the membrane. Involved in cytoskeletal rearrangements required for phagocytosis of apoptotic cells and cell motility. Acts in association with DOCK1 and CRK. Was initially proposed to be required in complex with DOCK1 to activate Rac Rho small GTPases. May enhance the guanine nucleotide exchange factor (GEF) activity of DOCK1. The chain is Engulfment and cell motility protein 2 (Elmo2) from Mus musculus (Mouse).